The chain runs to 250 residues: 2,3-bisphosphoglycerate-dependent phosphoglycerate mutase (250 aa).

13 residues coordinate (2R)-2,3-bisphosphoglycerate: R10, H11, N17, G24, R62, E89, Y92, K100, R116, R117, H184, G185, and N186. H11 serves as the catalytic Tele-phosphohistidine intermediate. G24 lines the (2R)-3-phosphoglycerate pocket. Residues E89, Y92, K100, R116, and R117 each contribute to the (2R)-3-phosphoglycerate site. The active-site Proton donor/acceptor is E89. N186 contributes to the (2R)-3-phosphoglycerate binding site.

It belongs to the phosphoglycerate mutase family. BPG-dependent PGAM subfamily. Ubiquitously expressed with the highest expression in the sub-tegumental muscle layer (at protein level). Expressed in the tegument (at protein level).

It is found in the tegument. It carries out the reaction (2R)-2-phosphoglycerate = (2R)-3-phosphoglycerate. Its pathway is carbohydrate degradation; glycolysis; pyruvate from D-glyceraldehyde 3-phosphate: step 3/5. With respect to regulation, strongly activated by 2,3-bisphosphoglycerate (2,3-BPG). Inhibited by vanadate in a dose-dependent manner. Functionally, catalyzes interconversion of 3- and 2-phosphoglycerate with 2,3-bisphosphoglycerate (2,3-BPG) as the primer of the reaction. Schistosomula have significant surface phosphoglycerate mutase activity also without 2,3-BPG. Binds human plasminogen and enhances its conversion to active thrombolytic plasmin in the presence of human tissue plasminogen activator (tPA) in vitro. Host-interactive surface protein, which may degrade vascular blood clots surrounding the worm in vivo and thus may help survival of the parasite in its host microenvironment. The polypeptide is 2,3-bisphosphoglycerate-dependent phosphoglycerate mutase (Schistosoma mansoni (Blood fluke)).